The chain runs to 897 residues: Ubiquitin carboxyl-terminal hydrolase 33 (897 aa).

The segment at 7–110 adopts a UBP-type zinc-finger fold; sequence NDCPHLECVG…KQLPNAAKAV (104 aa). Residues Cys9, His11, Cys31, Cys34, Cys44, Cys49, Cys54, His61, His65, His71, Cys84, and Cys87 each contribute to the Zn(2+) site. One can recognise a USP domain in the interval 156–670; that stretch reads TGLKNIGNTC…EAYVLFYKKS (515 aa). The Nucleophile role is filled by Cys165. Disordered stretches follow at residues 261–308 and 343–420; these read LIPE…GPRV and GSHG…HKKV. A compositionally biased stretch (polar residues) spans 287 to 297; it reads DDFQSCESCGS. Composition is skewed to basic and acidic residues over residues 299–308 and 344–353; these read DRADNEGPRV and SHGDLDKDVD. The segment covering 355 to 396 has biased composition (polar residues); sequence TSDSRPIISSQGAIKAQGRTSDSEIQVSSTVRPQSPTGNEGI. Residues 398 to 411 are compositionally biased toward low complexity; the sequence is SRLSSSPPKSSAWP. His628 functions as the Proton acceptor in the catalytic mechanism. 2 consecutive DUSP domains span residues 672 to 765 and 773 to 876; these read DETQ…LYVC and EKLE…RPSV. Low complexity predominate over residues 875-884; it reads SVSHQESETS. The tract at residues 875 to 897 is disordered; the sequence is SVSHQESETSQSEEKIEVETRTV. The span at 886-897 shows a compositional bias: basic and acidic residues; it reads SEEKIEVETRTV.

Belongs to the peptidase C19 family. USP20/USP33 subfamily.

The protein resides in the cytoplasm. The protein localises to the perinuclear region. Its subcellular location is the cytoskeleton. It localises to the microtubule organizing center. It is found in the centrosome. It carries out the reaction Thiol-dependent hydrolysis of ester, thioester, amide, peptide and isopeptide bonds formed by the C-terminal Gly of ubiquitin (a 76-residue protein attached to proteins as an intracellular targeting signal).. Deubiquitinating enzyme involved in various processes such as centrosome duplication, cellular migration and beta-2 adrenergic receptor/ADRB2 recycling. Involved in regulation of centrosome duplication by mediating deubiquitination of ccp110 in S and G2/M phase, leading to stabilize ccp110 during the period which centrioles duplicate and elongate. Involved in cell migration via its interaction with intracellular domain of robo1, leading to regulate the Slit signaling. Plays a role in commissural axon guidance cross the ventral midline of the neural tube in a Slit-dependent manner, possibly by mediating the deubiquitination of robo1. Acts as a regulator of G-protein coupled receptor (GPCR) signaling by mediating the deubiquitination of beta-arrestins (arrb1 and arrb2) and beta-2 adrenergic receptor (adrb2). Deubiquitinates dio2, thereby regulating thyroid hormone regulation. Mediates deubiquitination of both 'Lys-48'- and 'Lys-63'-linked polyubiquitin chains. This is Ubiquitin carboxyl-terminal hydrolase 33 (usp33) from Danio rerio (Zebrafish).